The following is a 312-amino-acid chain: Deoxycytidylate deaminase (312 aa).

Positions 162-291 constitute a CMP/dCMP-type deaminase domain; it reads SWDSYFMKLA…RMDEESFKVL (130 aa). A Zn(2+)-binding site is contributed by His233. Glu235 acts as the Proton donor in catalysis. The Zn(2+) site is built by Cys260 and Cys263.

This sequence belongs to the cytidine and deoxycytidylate deaminase family. Requires Zn(2+) as cofactor.

It carries out the reaction dCMP + H2O + H(+) = dUMP + NH4(+). Its activity is regulated as follows. Allosteric enzyme whose activity is greatly influenced by the end products of its metabolic pathway, dCTP and dTTP. Catalyzes the hydrolytic deamination of dCMP to yield dUMP, the nucleotide substrate for thymidylate synthetase. The polypeptide is Deoxycytidylate deaminase (Saccharomyces cerevisiae (strain ATCC 204508 / S288c) (Baker's yeast)).